A 287-amino-acid chain; its full sequence is Putative S-adenosyl-L-methionine-dependent methyltransferase SACE_1742 (287 aa).

S-adenosyl-L-methionine is bound by residues Asp119 and 148-149 (DL).

The protein belongs to the UPF0677 family.

Functionally, exhibits S-adenosyl-L-methionine-dependent methyltransferase activity. This chain is Putative S-adenosyl-L-methionine-dependent methyltransferase SACE_1742, found in Saccharopolyspora erythraea (strain ATCC 11635 / DSM 40517 / JCM 4748 / NBRC 13426 / NCIMB 8594 / NRRL 2338).